Reading from the N-terminus, the 61-residue chain is Small ribosomal subunit protein uS14 (61 aa).

Residues cysteine 24, cysteine 27, cysteine 40, and cysteine 43 each coordinate Zn(2+).

The protein belongs to the universal ribosomal protein uS14 family. Zinc-binding uS14 subfamily. In terms of assembly, part of the 30S ribosomal subunit. Contacts proteins S3 and S10. The cofactor is Zn(2+).

Binds 16S rRNA, required for the assembly of 30S particles and may also be responsible for determining the conformation of the 16S rRNA at the A site. This Beutenbergia cavernae (strain ATCC BAA-8 / DSM 12333 / CCUG 43141 / JCM 11478 / NBRC 16432 / NCIMB 13614 / HKI 0122) protein is Small ribosomal subunit protein uS14.